The following is a 412-amino-acid chain: Glutamate dehydrogenase (412 aa).

Residue lysine 102 is part of the active site.

Belongs to the Glu/Leu/Phe/Val dehydrogenases family. In terms of tissue distribution, in roots, stems, leaves and flowers but not in fruits.

It is found in the mitochondrion matrix. It catalyses the reaction L-glutamate + NAD(+) + H2O = 2-oxoglutarate + NH4(+) + NADH + H(+). It carries out the reaction L-glutamate + NADP(+) + H2O = 2-oxoglutarate + NH4(+) + NADPH + H(+). In Solanum lycopersicum (Tomato), this protein is Glutamate dehydrogenase (GDH1).